A 348-amino-acid polypeptide reads, in one-letter code: GTPase Obg (348 aa).

The 160-residue stretch at 1–160 (MHFLDQAKIF…MWVWLRLKLL (160 aa)) folds into the Obg domain. The segment at 120 to 145 (RGGDGGRGNASYKTSTNRAPRQHGPG) is disordered. Residues 161–328 (ADAGLVGLPN…VLDKLLEAIG (168 aa)) form the OBG-type G domain. Residues 167–174 (GLPNAGKS), 192–196 (FTTLR), 213–216 (DIPG), 280–283 (NKID), and 309–311 (SGA) contribute to the GTP site. Residues S174 and T194 each contribute to the Mg(2+) site. The tract at residues 326 to 348 (AIGQPEPGPDADEEEKGGDWSPI) is disordered.

This sequence belongs to the TRAFAC class OBG-HflX-like GTPase superfamily. OBG GTPase family. In terms of assembly, monomer. The cofactor is Mg(2+).

It localises to the cytoplasm. An essential GTPase which binds GTP, GDP and possibly (p)ppGpp with moderate affinity, with high nucleotide exchange rates and a fairly low GTP hydrolysis rate. Plays a role in control of the cell cycle, stress response, ribosome biogenesis and in those bacteria that undergo differentiation, in morphogenesis control. The protein is GTPase Obg of Sphingopyxis alaskensis (strain DSM 13593 / LMG 18877 / RB2256) (Sphingomonas alaskensis).